The following is a 129-amino-acid chain: MLHLHILSWVLAIILFIATYLNISKNQGGTPYFKPLHMVLRLFMLLTLISGFWILIQSFMNGGANHMLLTLKMLCGVAVVGLMEVSIAKRKRHEQSHTMFWITIALIIITMVLGVILPLGPISKLFGIG.

4 helical membrane passes run Met1–Leu21, Leu36–Ile56, Met67–Ile87, and Met99–Leu119.

This sequence belongs to the UPF0344 family.

The protein localises to the cell membrane. The sequence is that of UPF0344 protein SAR0931 from Staphylococcus aureus (strain MRSA252).